Here is a 208-residue protein sequence, read N- to C-terminus: Outer-membrane lipoprotein carrier protein (208 aa).

The first 21 residues, 1–21 (MPAFRYLIVLPLLCWGFASQA), serve as a signal peptide directing secretion.

It belongs to the LolA family. As to quaternary structure, monomer.

It is found in the periplasm. In terms of biological role, participates in the translocation of lipoproteins from the inner membrane to the outer membrane. Only forms a complex with a lipoprotein if the residue after the N-terminal Cys is not an aspartate (The Asp acts as a targeting signal to indicate that the lipoprotein should stay in the inner membrane). This is Outer-membrane lipoprotein carrier protein from Methylococcus capsulatus (strain ATCC 33009 / NCIMB 11132 / Bath).